Consider the following 137-residue polypeptide: Small ribosomal subunit protein bS6 (137 aa).

Positions 96 to 137 are disordered; sequence ITEASPMAKAKDERDTRRSSEERAPRAEAAEEVEESAENTAE. A compositionally biased stretch (basic and acidic residues) spans 104-124; the sequence is KAKDERDTRRSSEERAPRAEA. Positions 125–137 are enriched in acidic residues; it reads AEEVEESAENTAE.

It belongs to the bacterial ribosomal protein bS6 family.

Binds together with bS18 to 16S ribosomal RNA. In Shewanella halifaxensis (strain HAW-EB4), this protein is Small ribosomal subunit protein bS6.